The following is a 201-amino-acid chain: Superoxide dismutase [Mn/Fe] (201 aa).

His27, His75, Asp161, and His165 together coordinate Fe(3+). Mn(2+) contacts are provided by His27, His75, Asp161, and His165.

It belongs to the iron/manganese superoxide dismutase family. In terms of assembly, homotetramer. Mn(2+) serves as cofactor. Requires Fe(3+) as cofactor.

It catalyses the reaction 2 superoxide + 2 H(+) = H2O2 + O2. Shows decreasing activity with increasing pH. Slightly inhibited by azide and fluoride at pH 7-8; the inhibition is drastically increased towards lower pH. Its function is as follows. Destroys superoxide anion radicals which are normally produced within the cells and which are toxic to biological systems. Catalyzes the dismutation of superoxide anion radicals into O2 and H2O2 by successive reduction and oxidation of the transition metal ion at the active site. The protein is Superoxide dismutase [Mn/Fe] (sodA) of Propionibacterium freudenreichii subsp. shermanii.